Reading from the N-terminus, the 193-residue chain is Potassium-transporting ATPase KdpC subunit (193 aa).

A helical membrane pass occupies residues 7-27 (PLVVIFVVLTAVTGLAYPAVM).

This sequence belongs to the KdpC family. In terms of assembly, the system is composed of three essential subunits: KdpA, KdpB and KdpC.

The protein localises to the cell inner membrane. Part of the high-affinity ATP-driven potassium transport (or Kdp) system, which catalyzes the hydrolysis of ATP coupled with the electrogenic transport of potassium into the cytoplasm. This subunit acts as a catalytic chaperone that increases the ATP-binding affinity of the ATP-hydrolyzing subunit KdpB by the formation of a transient KdpB/KdpC/ATP ternary complex. This chain is Potassium-transporting ATPase KdpC subunit, found in Burkholderia ambifaria (strain ATCC BAA-244 / DSM 16087 / CCUG 44356 / LMG 19182 / AMMD) (Burkholderia cepacia (strain AMMD)).